A 400-amino-acid polypeptide reads, in one-letter code: Sensor histidine kinase LnrJ (400 aa).

Topologically, residues 1–2 are extracellular; that stretch reads MK. A helical membrane pass occupies residues 3–23; the sequence is ALFFTRMFTLMVSCLMYLSIV. The Cytoplasmic segment spans residues 24–27; it reads KEDN. The helical transmembrane segment at 28–48 threads the bilayer; it reads WFGYVFIAAGAAMYAANHVLL. Over 49-61 the chain is Extracellular; that stretch reads TKETNAIWFCLID. A helical transmembrane segment spans residues 62 to 82; the sequence is IAIGFSFGFIFPGTGLFIIML. At 83 to 101 the chain is on the cytoplasmic side; it reads CPVAVAFFLRGFPKRTAWS. A helical membrane pass occupies residues 102-122; that stretch reads VLCLSSILFLTVLIRTYAMFG. At 123 to 125 the chain is on the extracellular side; the sequence is NEF. A helical membrane pass occupies residues 126–146; that stretch reads VIDHLTSMTFVVFCGVVGKLI. Over 147–400 the chain is Cytoplasmic; sequence RKLLDAQDTA…GPVQQKESLS (254 aa). Positions 190 to 385 constitute a Histidine kinase domain; it reads IYERNRMARE…TVNAEFSLAN (196 aa). Histidine 201 carries the phosphohistidine; by autocatalysis modification.

Autophosphorylated.

It localises to the cell membrane. It catalyses the reaction ATP + protein L-histidine = ADP + protein N-phospho-L-histidine.. Its function is as follows. Required for resistance to linearmycins, a family of antibiotic-specialized metabolites produced by some streptomycetes. Member of the two-component regulatory system LnrJ/LnrK, which induces expression of the LnrLMN ABC transporter in response to linearmycins and other polyenes. Acts as a specific sensor for linearmycin, either directly through binding or indirectly through membrane perturbation. Probably activates LnrK by phosphorylation. May also promote biofilm formation. This is Sensor histidine kinase LnrJ from Bacillus subtilis (strain 168).